We begin with the raw amino-acid sequence, 260 residues long: Small ribosomal subunit protein uS2 (260 aa).

The protein belongs to the universal ribosomal protein uS2 family.

The sequence is that of Small ribosomal subunit protein uS2 from Staphylococcus carnosus (strain TM300).